We begin with the raw amino-acid sequence, 267 residues long: Hydroxyethylthiazole kinase (267 aa).

Residue methionine 48 participates in substrate binding. The ATP site is built by arginine 124 and serine 170. A substrate-binding site is contributed by glycine 197.

The protein belongs to the Thz kinase family. The cofactor is Mg(2+).

It carries out the reaction 5-(2-hydroxyethyl)-4-methylthiazole + ATP = 4-methyl-5-(2-phosphooxyethyl)-thiazole + ADP + H(+). The protein operates within cofactor biosynthesis; thiamine diphosphate biosynthesis; 4-methyl-5-(2-phosphoethyl)-thiazole from 5-(2-hydroxyethyl)-4-methylthiazole: step 1/1. Its function is as follows. Catalyzes the phosphorylation of the hydroxyl group of 4-methyl-5-beta-hydroxyethylthiazole (THZ). This Leptospira biflexa serovar Patoc (strain Patoc 1 / Ames) protein is Hydroxyethylthiazole kinase.